Reading from the N-terminus, the 373-residue chain is Sterol-4-alpha-carboxylate 3-dehydrogenase, decarboxylating (373 aa).

Methionine 1 bears the N-acetylmethionine mark. Threonine 22 is subject to Phosphothreonine. Residue tyrosine 172 is the Proton acceptor of the active site. Lysine 176 is an NAD(+) binding site. A helical membrane pass occupies residues 298 to 318 (WVAYYLALLLSLLVMVISPVI). The Prevents secretion from ER motif lies at 370-373 (RRVK).

This sequence belongs to the 3-beta-HSD family. Homodimer. Brain, heart, liver, lung, kidney, skin and placenta.

It localises to the endoplasmic reticulum membrane. It is found in the lipid droplet. It catalyses the reaction a 3beta-hydroxysteroid-4alpha-carboxylate + NADP(+) = a 3-oxosteroid + CO2 + NADPH. The catalysed reaction is a 3beta-hydroxysteroid-4alpha-carboxylate + NAD(+) = a 3-oxosteroid + CO2 + NADH. It carries out the reaction 4alpha-carboxyzymosterol + NADP(+) = zymosterone + CO2 + NADPH. The enzyme catalyses 4alpha-carboxy-4beta-methyl-5alpha-cholest-8-en-3beta-ol + NADP(+) = 4alpha-methyl-5alpha-cholest-8-en-3-one + CO2 + NADPH. It catalyses the reaction 4alpha-carboxy-5alpha-cholest-8-ene-3beta-ol + NADP(+) = 5alpha-cholest-8-en-3-one + CO2 + NADPH. The catalysed reaction is 4beta-methylzymosterol-4alpha-carboxylate + NADP(+) = 3-dehydro-4-methylzymosterol + CO2 + NADPH. It carries out the reaction 4beta-methylzymosterol-4alpha-carboxylate + NAD(+) = 3-dehydro-4-methylzymosterol + CO2 + NADH. The enzyme catalyses 4alpha-carboxy-5alpha-cholest-8-ene-3beta-ol + NAD(+) = 5alpha-cholest-8-en-3-one + CO2 + NADH. It catalyses the reaction 4alpha-carboxy-4beta-methyl-5alpha-cholest-8-en-3beta-ol + NAD(+) = 4alpha-methyl-5alpha-cholest-8-en-3-one + CO2 + NADH. The catalysed reaction is 4alpha-carboxyzymosterol + NAD(+) = zymosterone + CO2 + NADH. It functions in the pathway steroid biosynthesis; zymosterol biosynthesis; zymosterol from lanosterol: step 4/6. Its function is as follows. Catalyzes the NAD(P)(+)-dependent oxidative decarboxylation of the C4 methyl groups of 4-alpha-carboxysterols in post-squalene cholesterol biosynthesis. Also plays a role in the regulation of the endocytic trafficking of EGFR. The sequence is that of Sterol-4-alpha-carboxylate 3-dehydrogenase, decarboxylating (NSDHL) from Homo sapiens (Human).